Here is a 394-residue protein sequence, read N- to C-terminus: Elongation factor Tu, mitochondrial (394 aa).

The tr-type G domain occupies 10 to 204 (KPHCNIGTIG…AVDNYIPQPE (195 aa)). The segment at 19-26 (GHVDHGKT) is G1. Residue 19–26 (GHVDHGKT) coordinates GTP. The tract at residues 60–64 (GITIS) is G2. The segment at 81–84 (DCPG) is G3. GTP is bound by residues 81–85 (DCPGH) and 136–139 (NKVD). Positions 136–139 (NKVD) are G4. Residues 174 to 176 (SAL) form a G5 region.

Belongs to the TRAFAC class translation factor GTPase superfamily. Classic translation factor GTPase family. EF-Tu/EF-1A subfamily.

The protein localises to the mitochondrion. This protein promotes the GTP-dependent binding of aminoacyl-tRNA to the A-site of ribosomes during protein biosynthesis. This Reclinomonas americana protein is Elongation factor Tu, mitochondrial (TUFA).